The sequence spans 51 residues: Insulin (51 aa).

Cystine bridges form between Cys7-Cys37, Cys19-Cys50, and Cys36-Cys41.

This sequence belongs to the insulin family. As to quaternary structure, heterodimer of a B chain and an A chain linked by two disulfide bonds.

The protein resides in the secreted. Its function is as follows. Insulin decreases blood glucose concentration. It increases cell permeability to monosaccharides, amino acids and fatty acids. It accelerates glycolysis, the pentose phosphate cycle, and glycogen synthesis in liver. The protein is Insulin (ins) of Anguilla rostrata (American eel).